A 186-amino-acid chain; its full sequence is TATA-box-binding protein E (186 aa).

Repeat copies occupy residues isoleucine 10 to leucine 86 and valine 101 to leucine 179.

This sequence belongs to the TBP family.

Its function is as follows. General factor that plays a role in the activation of archaeal genes transcribed by RNA polymerase. Binds specifically to the TATA box promoter element which lies close to the position of transcription initiation. The sequence is that of TATA-box-binding protein E (tbpE) from Halobacterium salinarum (strain ATCC 700922 / JCM 11081 / NRC-1) (Halobacterium halobium).